The sequence spans 371 residues: Glycosyltransferase 8 domain-containing protein 1 (371 aa).

The Cytoplasmic segment spans residues 1–7; sequence MSFRKVN. The helical; Signal-anchor for type II membrane protein transmembrane segment at 8–28 threads the bilayer; the sequence is IVILVLAVALFLLVLHHNFLG. The Lumenal portion of the chain corresponds to 29–371; sequence LSSLLRNEVS…RRHVEISNTK (343 aa). Residues N103 and N257 are each glycosylated (N-linked (GlcNAc...) asparagine).

It belongs to the glycosyltransferase 8 family.

It localises to the membrane. The protein is Glycosyltransferase 8 domain-containing protein 1 (GLT8D1) of Bos taurus (Bovine).